A 501-amino-acid polypeptide reads, in one-letter code: ATP synthase subunit alpha, chloroplastic (501 aa).

Gly170–Thr177 is an ATP binding site.

The protein belongs to the ATPase alpha/beta chains family. As to quaternary structure, F-type ATPases have 2 components, CF(1) - the catalytic core - and CF(0) - the membrane proton channel. CF(1) has five subunits: alpha(3), beta(3), gamma(1), delta(1), epsilon(1). CF(0) has four main subunits: a, b, b' and c.

The protein localises to the plastid. It localises to the chloroplast thylakoid membrane. The catalysed reaction is ATP + H2O + 4 H(+)(in) = ADP + phosphate + 5 H(+)(out). Its function is as follows. Produces ATP from ADP in the presence of a proton gradient across the membrane. The alpha chain is a regulatory subunit. In Pisum sativum (Garden pea), this protein is ATP synthase subunit alpha, chloroplastic.